Consider the following 105-residue polypeptide: Nitrogen fixation nifHD region GlnB-like protein 1 (105 aa).

It belongs to the P(II) protein family.

Its function is as follows. Could be involved in the regulation of nitrogen fixation. This chain is Nitrogen fixation nifHD region GlnB-like protein 1 (glnBA), found in Methanothermococcus thermolithotrophicus (Methanococcus thermolithotrophicus).